The sequence spans 129 residues: Small ribosomal subunit protein uS11 (129 aa).

The protein belongs to the universal ribosomal protein uS11 family. In terms of assembly, part of the 30S ribosomal subunit. Interacts with proteins S7 and S18. Binds to IF-3.

In terms of biological role, located on the platform of the 30S subunit, it bridges several disparate RNA helices of the 16S rRNA. Forms part of the Shine-Dalgarno cleft in the 70S ribosome. In Geobacillus stearothermophilus (Bacillus stearothermophilus), this protein is Small ribosomal subunit protein uS11.